The sequence spans 401 residues: Argininosuccinate synthase (401 aa).

ATP is bound at residue 8 to 16; that stretch reads AYSGGLDTT. L-citrulline is bound at residue tyrosine 87. Glycine 117 lines the ATP pocket. Threonine 119, asparagine 123, and aspartate 124 together coordinate L-aspartate. Position 123 (asparagine 123) interacts with L-citrulline. 4 residues coordinate L-citrulline: arginine 127, serine 175, glutamate 259, and tyrosine 271.

Belongs to the argininosuccinate synthase family. Type 1 subfamily. As to quaternary structure, homotetramer.

Its subcellular location is the cytoplasm. It carries out the reaction L-citrulline + L-aspartate + ATP = 2-(N(omega)-L-arginino)succinate + AMP + diphosphate + H(+). Its pathway is amino-acid biosynthesis; L-arginine biosynthesis; L-arginine from L-ornithine and carbamoyl phosphate: step 2/3. This Corynebacterium glutamicum (strain ATCC 13032 / DSM 20300 / JCM 1318 / BCRC 11384 / CCUG 27702 / LMG 3730 / NBRC 12168 / NCIMB 10025 / NRRL B-2784 / 534) protein is Argininosuccinate synthase.